The sequence spans 62 residues: UPF0434 protein SPO3421 (62 aa).

It belongs to the UPF0434 family.

This Ruegeria pomeroyi (strain ATCC 700808 / DSM 15171 / DSS-3) (Silicibacter pomeroyi) protein is UPF0434 protein SPO3421.